Reading from the N-terminus, the 922-residue chain is Hexokinase-3 (922 aa).

The tract at residues M1–V23 is disordered. Hexokinase domains lie at R25–A469 and A475–A911. The hexokinase small subdomain 1 stretch occupies residues H82–V218. E93–S100 is an ATP binding site. E93–R102 is a D-glucose 6-phosphate binding site. Residues S166, T183 to K184, and N219 to D220 each bind D-glucose. The segment at N219–D458 is hexokinase large subdomain 1. D-glucose 6-phosphate is bound by residues D220 and T243. D-glucose-binding positions include N246, E271, and Q302–E305. A D-glucose 6-phosphate-binding site is contributed by G424 to R426. Residues R436 to I437 and D540 to N545 each bind ATP. Positions D529–V660 are hexokinase small subdomain 2. Residue D540–T544 participates in D-glucose 6-phosphate binding. D-glucose contacts are provided by residues S608–F609, T625–K626, and N661–D662. Positions N661 to D900 are hexokinase large subdomain 2. D662 and T685 together coordinate D-glucose 6-phosphate. T685 is a binding site for ATP. Residues T687–N688, E713, and E747 contribute to the D-glucose site. Residues G752 to M753, T789 to S793, and T868 to L872 contribute to the ATP site. D-glucose 6-phosphate is bound by residues D866–T868 and S902.

The protein belongs to the hexokinase family.

The catalysed reaction is a D-hexose + ATP = a D-hexose 6-phosphate + ADP + H(+). The enzyme catalyses D-fructose + ATP = D-fructose 6-phosphate + ADP + H(+). It catalyses the reaction D-glucose + ATP = D-glucose 6-phosphate + ADP + H(+). The protein operates within carbohydrate metabolism; hexose metabolism. It functions in the pathway carbohydrate degradation; glycolysis; D-glyceraldehyde 3-phosphate and glycerone phosphate from D-glucose: step 1/4. With respect to regulation, hexokinase is an allosteric enzyme inhibited by its product D-glucose 6-phosphate. Functionally, catalyzes the phosphorylation of hexose, such as D-glucose and D-fructose, to hexose 6-phosphate (D-glucose 6-phosphate and D-fructose 6-phosphate, respectively). Mediates the initial step of glycolysis by catalyzing phosphorylation of D-glucose to D-glucose 6-phosphate. This Mus musculus (Mouse) protein is Hexokinase-3.